The following is a 281-amino-acid chain: Leukocyte antigen CD37 (281 aa).

Residues 1 to 17 (MSAQESCLSLIKYFLFV) lie on the Cytoplasmic side of the membrane. Residues 18 to 38 (FNLFFFVLGGLIFCFGTWILI) form a helical membrane-spanning segment. The Extracellular portion of the chain corresponds to 39–59 (DKTSFVSFVGLSFVPLQTWSK). The chain crosses the membrane as a helical span at residues 60 to 74 (VLAVSGVLTMALALL). The Cytoplasmic segment spans residues 75-85 (GCVGALKELRC). A helical transmembrane segment spans residues 86–111 (LLGLYFGMLLLLFATQITLGILISTQ). The Extracellular segment spans residues 112–241 (RVRLERRVQE…QSLQKWLHNN (130 aa)). Residues asparagine 170, asparagine 183, and asparagine 188 are each glycosylated (N-linked (GlcNAc...) asparagine). Residues 242-266 (IISIVGICLGVGLLELGFMTLSIFL) form a helical membrane-spanning segment. At 267–281 (CRNLDHVYDRLARYR) the chain is on the cytoplasmic side.

The protein belongs to the tetraspanin (TM4SF) family. In terms of assembly, interacts with SCIMP. Interacts with SOCS3. Interacts with DECTIN1/CLEC7A. Tyrosine phosphorylated; leading to activation of downstream signaling pathways.

The protein localises to the cell membrane. In terms of biological role, structural component of specialized membrane microdomains known as tetraspanin-enriched microdomains (TERMs), which act as platforms for receptor clustering and signaling. Participates thereby in diverse biological functions such as cell signal transduction, adhesion, migration and protein trafficking. Upon ligand binding, two signaling pathways are activated, one acting through phosphorylation by LYN leading to cell death or a survival pathway with activation of GSK3B. Plays an essential role for clustering of integrin ITGA4/ITGB1 and promotes its mobility in the plasma membrane of B-cells. In turn, participates in ITGA4/ITGB1 integrin-mediated antiapoptotic signaling through AKT. Also plays a role in the migration of dendritic cells and neutrophils to draining lymph nodes, as well as in their integrin-mediated adhesion. Negatively regulates IL-6 responses through direct interaction with SOCS3 thereby preventing constitutive IL-6 signaling. Alternatively, inhibition of IL-6 signaling can also occur via interaction and stabilization of DECTIN1/CLEC7A at the cell membrane to inhibit its ability to promote the production of IL-6. This chain is Leukocyte antigen CD37 (Cd37), found in Mus musculus (Mouse).